A 547-amino-acid chain; its full sequence is DNA polymerase kappa (547 aa).

The tract at residues 18-39 (LTIEDDGSSSSDEEATLKRRLA) is disordered. Acidic residues predominate over residues 20-31 (IEDDGSSSSDEE). One can recognise a UmuC domain in the interval 132–316 (IVHVDCDAFY…LPVREVSGIG (185 aa)). The Mg(2+) site is built by Asp136 and Asp226. A UBZ4-type zinc finger spans residues 489–518 (TVPCPVCQKNIENELGILNQHVDLCLNVET). Zn(2+)-binding residues include Cys492, Cys495, His509, and Cys513.

Interacts with hus1 and rad17.

Its subcellular location is the cytoplasm. The protein localises to the nucleus. The catalysed reaction is DNA(n) + a 2'-deoxyribonucleoside 5'-triphosphate = DNA(n+1) + diphosphate. DNA polymerase specifically involved in DNA repair. Plays an important role in translesion synthesis, where the normal high-fidelity DNA polymerases cannot proceed and DNA synthesis stalls. Has a role in meiosis. This chain is DNA polymerase kappa (mug40), found in Schizosaccharomyces pombe (strain 972 / ATCC 24843) (Fission yeast).